The following is an 800-amino-acid chain: Phenylalanine--tRNA ligase beta subunit (800 aa).

The 110-residue stretch at 39–148 folds into the tRNA-binding domain; the sequence is TAALAPFVVG…ADTPVGVPLV (110 aa). One can recognise a B5 domain in the interval 402–478; that stretch reads VWRRTIALRP…RLHGFDLVPA (77 aa). The Mg(2+) site is built by aspartate 456, aspartate 462, glutamate 465, and glutamate 466. An FDX-ACB domain is found at 706-799; that stretch reads SPFQPVARDF…VTKLTGGSLR (94 aa).

This sequence belongs to the phenylalanyl-tRNA synthetase beta subunit family. Type 1 subfamily. In terms of assembly, tetramer of two alpha and two beta subunits. Mg(2+) is required as a cofactor.

It is found in the cytoplasm. The catalysed reaction is tRNA(Phe) + L-phenylalanine + ATP = L-phenylalanyl-tRNA(Phe) + AMP + diphosphate + H(+). The chain is Phenylalanine--tRNA ligase beta subunit from Rhodospirillum rubrum (strain ATCC 11170 / ATH 1.1.1 / DSM 467 / LMG 4362 / NCIMB 8255 / S1).